The chain runs to 227 residues: Endo-1,4-beta-xylanase 2 (227 aa).

Residues 1–36 form the signal peptide; sequence MVSIKSVLAAATAVSSALAAPFDFVPRDNSTALQAR. The N-linked (GlcNAc...) asparagine glycan is linked to Asn29. The region spanning 37-225 is the GH11 domain; sequence QVTPNAEGWH…SSGESDIYVQ (189 aa). The active-site Nucleophile is the Glu121. The active-site Proton donor is the Glu212.

Belongs to the glycosyl hydrolase 11 (cellulase G) family.

Its subcellular location is the secreted. The enzyme catalyses Endohydrolysis of (1-&gt;4)-beta-D-xylosidic linkages in xylans.. The protein operates within glycan degradation; xylan degradation. In terms of biological role, endo-1,4-beta-xylanase involved in the hydrolysis of xylan, a major structural heterogeneous polysaccharide found in plant biomass representing the second most abundant polysaccharide in the biosphere, after cellulose. In Humicola insolens (Soft-rot fungus), this protein is Endo-1,4-beta-xylanase 2 (xyn2).